Reading from the N-terminus, the 463-residue chain is Phosphoglucosamine mutase (463 aa).

The Phosphoserine intermediate role is filled by Ser-108. Residues Ser-108, Asp-247, Asp-249, and Asp-251 each contribute to the Mg(2+) site. The residue at position 108 (Ser-108) is a Phosphoserine.

It belongs to the phosphohexose mutase family. Mg(2+) is required as a cofactor. In terms of processing, activated by phosphorylation.

The catalysed reaction is alpha-D-glucosamine 1-phosphate = D-glucosamine 6-phosphate. In terms of biological role, catalyzes the conversion of glucosamine-6-phosphate to glucosamine-1-phosphate. The polypeptide is Phosphoglucosamine mutase (Nitrosospira multiformis (strain ATCC 25196 / NCIMB 11849 / C 71)).